The following is a 206-amino-acid chain: Molybdopterin synthase catalytic subunit (206 aa).

Residues 1–23 are compositionally biased toward polar residues; it reads MATQQPTQTDNSAQAQPPQTNPA. Positions 1–27 are disordered; sequence MATQQPTQTDNSAQAQPPQTNPAKPTE. Substrate is bound by residues 131–132, Lys147, and 154–156; these read HR and KRE. The span at 177–188 shows a compositional bias: basic and acidic residues; the sequence is KVDEPRIGKGEV. The tract at residues 177-206 is disordered; sequence KVDEPRIGKGEVDEKEDEGDSGNGGNDRKS. Gly residues predominate over residues 197-206; the sequence is SGNGGNDRKS.

It belongs to the MoaE family. MOCS2B subfamily. Heterotetramer; composed of 2 small (MOCS2A) and 2 large (MOCS2B) subunits.

It is found in the cytoplasm. The enzyme catalyses 2 [molybdopterin-synthase sulfur-carrier protein]-C-terminal-Gly-aminoethanethioate + cyclic pyranopterin phosphate + H2O = molybdopterin + 2 [molybdopterin-synthase sulfur-carrier protein]-C-terminal Gly-Gly + 2 H(+). It participates in cofactor biosynthesis; molybdopterin biosynthesis. In terms of biological role, catalytic subunit of the molybdopterin synthase complex, a complex that catalyzes the conversion of precursor Z into molybdopterin. Acts by mediating the incorporation of 2 sulfur atoms from thiocarboxylated MOCS2A into precursor Z to generate a dithiolene group. In Neurospora crassa (strain ATCC 24698 / 74-OR23-1A / CBS 708.71 / DSM 1257 / FGSC 987), this protein is Molybdopterin synthase catalytic subunit (nit-8).